The sequence spans 549 residues: Probable protein kinase UbiB (549 aa).

One can recognise a Protein kinase domain in the interval 123 to 501 (DFDDIPLASA…QQKAHKSNYL (379 aa)). ATP contacts are provided by residues 129–137 (LASASISQV) and Lys-152. Asp-287 serves as the catalytic Proton acceptor. The next 2 helical transmembrane spans lie at 498–518 (SNYL…LINQ) and 520–540 (ATLW…VLGW).

The protein belongs to the ABC1 family. UbiB subfamily.

Its subcellular location is the cell inner membrane. The protein operates within cofactor biosynthesis; ubiquinone biosynthesis [regulation]. Is probably a protein kinase regulator of UbiI activity which is involved in aerobic coenzyme Q (ubiquinone) biosynthesis. This chain is Probable protein kinase UbiB, found in Shewanella halifaxensis (strain HAW-EB4).